A 337-amino-acid polypeptide reads, in one-letter code: Transcription initiation factor IIB (337 aa).

The segment at 37 to 68 (EKAVCPECGSRNLVHDYERAELVCGDCGLVID) adopts a TFIIB-type zinc-finger fold. Zn(2+)-binding residues include Cys41, Cys44, Cys60, and Cys63. Repeat copies occupy residues 154-237 (SELD…SREL) and 248-329 (DYVP…ELAE).

It belongs to the TFIIB family.

Functionally, stabilizes TBP binding to an archaeal box-A promoter. Also responsible for recruiting RNA polymerase II to the pre-initiation complex (DNA-TBP-TFIIB). The sequence is that of Transcription initiation factor IIB from Methanosarcina mazei (Methanosarcina frisia).